Reading from the N-terminus, the 60-residue chain is Short neurotoxin 1 (60 aa).

Intrachain disulfides connect Cys3–Cys22, Cys17–Cys39, Cys41–Cys52, and Cys53–Cys58.

The protein belongs to the three-finger toxin family. Short-chain subfamily. Type I alpha-neurotoxin sub-subfamily. As to expression, expressed by the venom gland.

It localises to the secreted. Binds to muscle nicotinic acetylcholine receptor (nAChR) and inhibit acetylcholine from binding to the receptor, thereby impairing neuromuscular transmission. This is Short neurotoxin 1 from Dendroaspis polylepis polylepis (Black mamba).